We begin with the raw amino-acid sequence, 148 residues long: NADH-quinone oxidoreductase subunit K 2 (148 aa).

3 helical membrane-spanning segments follow: residues 3–23 (LAYPAVLAALLFCVGLYGVLA), 28–48 (ILVLMSVELMLNAVNLNLVAF), and 64–84 (LFTIAIAAAEIGIGLAIVLAV). The disordered stretch occupies residues 96 to 148 (LRDTAETDAAETLPDDAGTGPSGTDAAPNGDTTTATGRPGDNAGKNKKAEATR).

Belongs to the complex I subunit 4L family. As to quaternary structure, NDH-1 is composed of 14 different subunits. Subunits NuoA, H, J, K, L, M, N constitute the membrane sector of the complex.

The protein resides in the cell membrane. The enzyme catalyses a quinone + NADH + 5 H(+)(in) = a quinol + NAD(+) + 4 H(+)(out). In terms of biological role, NDH-1 shuttles electrons from NADH, via FMN and iron-sulfur (Fe-S) centers, to quinones in the respiratory chain. The immediate electron acceptor for the enzyme in this species is believed to be a menaquinone. Couples the redox reaction to proton translocation (for every two electrons transferred, four hydrogen ions are translocated across the cytoplasmic membrane), and thus conserves the redox energy in a proton gradient. The protein is NADH-quinone oxidoreductase subunit K 2 of Streptomyces griseus subsp. griseus (strain JCM 4626 / CBS 651.72 / NBRC 13350 / KCC S-0626 / ISP 5235).